The chain runs to 391 residues: Phosphoglycerate kinase (391 aa).

Residues 19 to 21 (DYN), R35, 58 to 61 (HMGR), R117, and R150 each bind substrate. Residues K201, E323, and 349-352 (GGDT) each bind ATP.

It belongs to the phosphoglycerate kinase family. Monomer.

The protein resides in the cytoplasm. It carries out the reaction (2R)-3-phosphoglycerate + ATP = (2R)-3-phospho-glyceroyl phosphate + ADP. It functions in the pathway carbohydrate degradation; glycolysis; pyruvate from D-glyceraldehyde 3-phosphate: step 2/5. This is Phosphoglycerate kinase from Desulforapulum autotrophicum (strain ATCC 43914 / DSM 3382 / VKM B-1955 / HRM2) (Desulfobacterium autotrophicum).